Here is a 427-residue protein sequence, read N- to C-terminus: Sensor histidine kinase ArsS (427 aa).

Transmembrane regions (helical) follow at residues 3–23 (FSIFFKVVALFMITLFSFGAF) and 131–151 (NYFLAITVGLLLILFLFLFVL). The HAMP domain occupies 151–203 (LQSLLPLRELRSQVKPFAQGDKSVSCKSKQKDEIGDLANEFDNCILKINAMNE). The region spanning 211-398 (SIMHELRTPI…LSYHYSNGRI (188 aa)) is the Histidine kinase domain. His214 carries the post-translational modification Phosphohistidine; by autocatalysis.

In terms of processing, autophosphorylated.

The protein resides in the membrane. The catalysed reaction is ATP + protein L-histidine = ADP + protein N-phospho-L-histidine.. Member of the two-component regulatory system ArsS/ArsR that regulates genes involved in biofilm formation and acid adaptation by acting on major ammonia-producing pathways. Functions as a sensor protein kinase which is autophosphorylated at a histidine residue and transfers its phosphate group to the conserved aspartic acid residue in the regulatory domain of ArsR. In turn, ArsR binds to the upstream promoter regions of target genes including ureA, amiE and amiF to positively regulate their expression in response to acidic pH. Also participates in acidic acclimatation in a phosphorylation-independent pathway by regulating acid-induced trafficking of urease and its accessory proteins to the inner membrane. This chain is Sensor histidine kinase ArsS, found in Helicobacter pylori (strain ATCC 700392 / 26695) (Campylobacter pylori).